We begin with the raw amino-acid sequence, 509 residues long: uncharacterized protein (509 aa).

In terms of domain architecture, G spans 108 to 225 (GKSSLCNLLA…KRHKPLFPVI (118 aa)).

This is an uncharacterized protein from Acinetobacter baylyi (strain ATCC 33305 / BD413 / ADP1).